The following is a 251-amino-acid chain: Exotoxin type A (251 aa).

The first 30 residues, 1-30 (MENNKKVLKKMVFFVLVTFLGLTISQEVFA), serve as a signal peptide directing secretion. An intrachain disulfide couples Cys-117 to Cys-128.

This sequence belongs to the staphylococcal/streptococcal toxin family.

In terms of biological role, causative agent of the symptoms associated with scarlet fever, have been associated with streptococcal toxic shock-like disease and may play a role in the early events of rheumatic fever. The polypeptide is Exotoxin type A (speA) (Streptococcus pyogenes serotype M18 (strain MGAS8232)).